The primary structure comprises 186 residues: Mediator of RNA polymerase II transcription subunit 10a (186 aa).

This sequence belongs to the Mediator complex subunit 10 family. As to quaternary structure, mono-, di- and oligomers. Component of the Mediator complex. Interacts with GEBPL.

Its subcellular location is the nucleus. Functionally, component of the Mediator complex, a coactivator involved in the regulated transcription of nearly all RNA polymerase II-dependent genes. Mediator functions as a bridge to convey information from gene-specific regulatory proteins to the basal RNA polymerase II transcription machinery. The Mediator complex, having a compact conformation in its free form, is recruited to promoters by direct interactions with regulatory proteins and serves for the assembly of a functional pre-initiation complex with RNA polymerase II and the general transcription factors. The protein is Mediator of RNA polymerase II transcription subunit 10a of Arabidopsis thaliana (Mouse-ear cress).